The primary structure comprises 559 residues: CCR4-NOT transcription complex subunit 6-like (559 aa).

Residues 1 to 148 (MPKEKYDPPD…LYQEPDGTRK (148 aa)) form a required for interaction with cnot1, cnot3 and cnot7 region. The segment at 1-550 (MPKEKYDPPD…NGLHLPVHST (550 aa)) is nuclease domain. LRR repeat units follow at residues 52-73 (HLTALHINNNNLSRIPPEIAKL), 75-96 (HLVYLNLSSNKLRSLPAELGNM), 98-120 (TLRELLLNNNCLRVLPYELGRLF), and 121-143 (QLQTLGLKGNPLSQDILNLYQEP). Mg(2+) is bound at residue Glu235. Substrate contacts are provided by Glu235, Glu271, His353, and Pro358. Mg(2+) is bound at residue Asp405. The Proton donor/acceptor role is filled by Asp405. Positions 407, 474, and 479 each coordinate substrate.

It belongs to the CCR4/nocturin family. In terms of assembly, component of the CCR4-NOT complex. Mg(2+) is required as a cofactor.

The protein localises to the cytoplasm. It is found in the nucleus. It catalyses the reaction Exonucleolytic cleavage of poly(A) to 5'-AMP.. In terms of biological role, poly(A) nuclease with 3'-5' RNase activity. Catalytic component of the CCR4-NOT complex which is one of the major cellular mRNA deadenylases and is linked to various cellular processes including bulk mRNA degradation, miRNA-mediated repression, translational repression during translational initiation and general transcription regulation. Additional complex functions may be a consequence of its influence on mRNA expression. This Danio rerio (Zebrafish) protein is CCR4-NOT transcription complex subunit 6-like (cnot6l).